Consider the following 293-residue polypeptide: Tumor necrosis factor receptor superfamily member 13B (293 aa).

Topologically, residues 1 to 165 are extracellular; the sequence is MSGLGRSRRG…SADQVALVYS (165 aa). 2 TNFR-Cys repeats span residues 33–67 and 70–104; these read SCPEEQYWDPLLGTCMSCKTICNHQSQRTCAAFCR and SCRKEQGKFYDHLLRDCISCASICGQHPKQCAYFC. Disulfide bonds link C34/C47, C50/C62, C54/C66, C71/C86, C89/C100, and C93/C104. The tract at residues 115–146 is disordered; that stretch reads PPELRRQRSGEVENNSDNSGRYQGLEHRGSEA. Residues 126 to 135 show a composition bias toward polar residues; sequence VENNSDNSGR. N-linked (GlcNAc...) asparagine glycosylation occurs at N128. The chain crosses the membrane as a helical; Signal-anchor for type III membrane protein span at residues 166-186; that stretch reads TLGLCLCAVLCCFLVAVACFL. The Cytoplasmic portion of the chain corresponds to 187–293; sequence KKRGDPCSCQ…VPAQEGGPGA (107 aa). The disordered stretch occupies residues 192–226; it reads PCSCQPRSRPRQSPAKSSQDHAMEAGSPVSTSPEP.

As to quaternary structure, binds TRAF2, TRAF5 and TRAF6. Binds the NH2-terminal domain of CAMLG with its C-terminus. As to expression, highly expressed in spleen, thymus, small intestine and peripheral blood leukocytes. Expressed in resting B-cells and activated T-cells, but not in resting T-cells.

Its subcellular location is the membrane. Receptor for TNFSF13/APRIL and TNFSF13B/TALL1/BAFF/BLYS that binds both ligands with similar high affinity. Mediates calcineurin-dependent activation of NF-AT, as well as activation of NF-kappa-B and AP-1. Involved in the stimulation of B- and T-cell function and the regulation of humoral immunity. The chain is Tumor necrosis factor receptor superfamily member 13B (TNFRSF13B) from Homo sapiens (Human).